The sequence spans 309 residues: Syndecan-1 (309 aa).

The first 22 residues, 1 to 22 (MRRAALWLWLCALALRLQPVLP), serve as a signal peptide directing secretion. Residues 23 to 253 (QIVTVNVPPE…GLLDRKEVLG (231 aa)) lie on the Extracellular side of the membrane. Disordered stretches follow at residues 28 to 57 (NVPPEDQDGSGDDSDNFSGSGTGALPDITL) and 145 to 185 (TTAQ…GGTS). The span at 32 to 42 (EDQDGSGDDSD) shows a compositional bias: acidic residues. The O-linked (Xyl...) (chondroitin sulfate) serine glycan is linked to serine 37. The N-linked (GlcNAc...) asparagine glycan is linked to asparagine 43. O-linked (Xyl...) (heparan sulfate) serine glycosylation is found at serine 45 and serine 47. Residues 173-183 (GQPDQQPPSGG) show a composition bias toward low complexity. 2 O-linked (Xyl...) (chondroitin sulfate) serine glycosylation sites follow: serine 205 and serine 215. A helical transmembrane segment spans residues 254-274 (GVIAGGLVGLIFAVCLVGFML). The Cytoplasmic segment spans residues 275 to 309 (YRMKKKDEGSYSLEEPKQANGGAYQKPTKQEEFYA). The segment at 283 to 309 (GSYSLEEPKQANGGAYQKPTKQEEFYA) is disordered. Residue serine 284 is modified to Phosphoserine.

It belongs to the syndecan proteoglycan family. As to quaternary structure, interacts with CDCP1. Interacts (via C-terminus) with TIAM1 (via PDZ domain). Interacts with MDK. In terms of processing, shedding is enhanced by a number of factors such as heparanase, thrombin or EGF. Also by stress and wound healing. PMA-mediated shedding is inhibited by TIMP3.

It is found in the membrane. The protein localises to the secreted. Its subcellular location is the extracellular exosome. In terms of biological role, cell surface proteoglycan that contains both heparan sulfate and chondroitin sulfate and that links the cytoskeleton to the interstitial matrix. Regulates exosome biogenesis in concert with SDCBP and PDCD6IP. Able to induce its own expression in dental mesenchymal cells and also in the neighboring dental epithelial cells via an MSX1-mediated pathway. The protein is Syndecan-1 of Mesocricetus auratus (Golden hamster).